Consider the following 161-residue polypeptide: N5-carboxyaminoimidazole ribonucleotide mutase (161 aa).

Substrate is bound by residues Ser-9, Asp-12, and Arg-39.

This sequence belongs to the AIR carboxylase family. Class I subfamily.

The catalysed reaction is 5-carboxyamino-1-(5-phospho-D-ribosyl)imidazole + H(+) = 5-amino-1-(5-phospho-D-ribosyl)imidazole-4-carboxylate. Its pathway is purine metabolism; IMP biosynthesis via de novo pathway; 5-amino-1-(5-phospho-D-ribosyl)imidazole-4-carboxylate from 5-amino-1-(5-phospho-D-ribosyl)imidazole (N5-CAIR route): step 2/2. Functionally, catalyzes the conversion of N5-carboxyaminoimidazole ribonucleotide (N5-CAIR) to 4-carboxy-5-aminoimidazole ribonucleotide (CAIR). This Vibrio cholerae serotype O1 (strain ATCC 39315 / El Tor Inaba N16961) protein is N5-carboxyaminoimidazole ribonucleotide mutase.